The following is a 285-amino-acid chain: Polyamine aminopropyltransferase (285 aa).

The PABS domain occupies 2-237; the sequence is EFWFSELHSP…GYWLFGFASK (236 aa). Residue glutamine 31 participates in S-methyl-5'-thioadenosine binding. Position 86 (aspartate 86) interacts with spermidine. S-methyl-5'-thioadenosine-binding positions include glutamate 106 and 137–138; that span reads DA. The Proton acceptor role is filled by aspartate 155.

Belongs to the spermidine/spermine synthase family. In terms of assembly, homodimer or homotetramer.

The protein localises to the cytoplasm. It catalyses the reaction S-adenosyl 3-(methylsulfanyl)propylamine + putrescine = S-methyl-5'-thioadenosine + spermidine + H(+). The protein operates within amine and polyamine biosynthesis; spermidine biosynthesis; spermidine from putrescine: step 1/1. Its function is as follows. Catalyzes the irreversible transfer of a propylamine group from the amino donor S-adenosylmethioninamine (decarboxy-AdoMet) to putrescine (1,4-diaminobutane) to yield spermidine. This Lachnospira eligens (strain ATCC 27750 / DSM 3376 / VPI C15-48 / C15-B4) (Eubacterium eligens) protein is Polyamine aminopropyltransferase.